Reading from the N-terminus, the 154-residue chain is Large ribosomal subunit protein uL11 (154 aa).

The protein belongs to the universal ribosomal protein uL11 family. Part of the ribosomal stalk of the 50S ribosomal subunit. Interacts with L10 and the large rRNA to form the base of the stalk. L10 forms an elongated spine to which L12 dimers bind in a sequential fashion forming a multimeric L10(L12)X complex. One or more lysine residues are methylated.

Its function is as follows. Forms part of the ribosomal stalk which helps the ribosome interact with GTP-bound translation factors. This Leuconostoc mesenteroides subsp. mesenteroides (strain ATCC 8293 / DSM 20343 / BCRC 11652 / CCM 1803 / JCM 6124 / NCDO 523 / NBRC 100496 / NCIMB 8023 / NCTC 12954 / NRRL B-1118 / 37Y) protein is Large ribosomal subunit protein uL11.